We begin with the raw amino-acid sequence, 201 residues long: MSKVLVLKSSILAGYSQSGQLTDYFIEQWREKHVADEITVRDLAAPPVPVLDGELVGAMRPGDAPLTPRQQDALALSDELIAELKAHDVIVIAAPMYNFNIPTQLKNYFDLIARAGITFRYTEKGPEGLVTGKRAVVLSSRGGIHKDTPTDLIAPYLKVFLGFIGITDVNFVFAEGIAYGPEVAAKAQADAKAAIDSVVAA.

FMN contacts are provided by residues S10, 16-18 (SQS), 96-99 (MYNF), and 140-143 (SRGG).

The protein belongs to the azoreductase type 1 family. As to quaternary structure, homodimer. The cofactor is FMN.

It carries out the reaction 2 a quinone + NADH + H(+) = 2 a 1,4-benzosemiquinone + NAD(+). The enzyme catalyses N,N-dimethyl-1,4-phenylenediamine + anthranilate + 2 NAD(+) = 2-(4-dimethylaminophenyl)diazenylbenzoate + 2 NADH + 2 H(+). In terms of biological role, quinone reductase that provides resistance to thiol-specific stress caused by electrophilic quinones. Also exhibits azoreductase activity. Catalyzes the reductive cleavage of the azo bond in aromatic azo compounds to the corresponding amines. This Salmonella choleraesuis (strain SC-B67) protein is FMN-dependent NADH:quinone oxidoreductase.